The chain runs to 276 residues: Rhomboid protease GlpG homolog (276 aa).

A run of 6 helical transmembrane segments spans residues 94–114, 142–162, 168–188, 192–212, 225–245, and 252–272; these read GPLT…MSII, LLLH…WYLA, SVGS…GGVI, IAGP…GYVW, LPRG…LGLF, and ADLV…TLHA.

This sequence belongs to the peptidase S54 family.

The protein localises to the cell inner membrane. This is Rhomboid protease GlpG homolog (glpG) from Cronobacter sakazakii (strain ATCC BAA-894) (Enterobacter sakazakii).